A 184-amino-acid polypeptide reads, in one-letter code: Ribosome maturation factor RimM (184 aa).

Positions 104–184 constitute a PRC barrel domain; it reads SEDEFYWREL…RIEVDWDPGF (81 aa).

The protein belongs to the RimM family. As to quaternary structure, binds ribosomal protein uS19.

It is found in the cytoplasm. In terms of biological role, an accessory protein needed during the final step in the assembly of 30S ribosomal subunit, possibly for assembly of the head region. Essential for efficient processing of 16S rRNA. May be needed both before and after RbfA during the maturation of 16S rRNA. It has affinity for free ribosomal 30S subunits but not for 70S ribosomes. The sequence is that of Ribosome maturation factor RimM from Vibrio atlanticus (strain LGP32) (Vibrio splendidus (strain Mel32)).